A 328-amino-acid chain; its full sequence is D-cysteine desulfhydrase (328 aa).

Position 51 is an N6-(pyridoxal phosphate)lysine (Lys-51).

This sequence belongs to the ACC deaminase/D-cysteine desulfhydrase family. Homodimer. Requires pyridoxal 5'-phosphate as cofactor.

It carries out the reaction D-cysteine + H2O = hydrogen sulfide + pyruvate + NH4(+) + H(+). Catalyzes the alpha,beta-elimination reaction of D-cysteine and of several D-cysteine derivatives. It could be a defense mechanism against D-cysteine. The polypeptide is D-cysteine desulfhydrase (Shigella boydii serotype 18 (strain CDC 3083-94 / BS512)).